A 164-amino-acid chain; its full sequence is MSVDPLSSKALKIKRELSENTPHLSDEALMGLSVRELNRHLRGLSAEEVTRLKQRRRTLKNRGYAASCRVKRVCQKEELQKQKSELEREVDKLARENAAMRLELDALRGKCEALQGFARSVAAARGPATLVAPASVITIVKSTPGSGSGPAHGPDPAHGPASCS.

The segment at 51 to 76 (RLKQRRRTLKNRGYAASCRVKRVCQK) is basic motif. Positions 51–114 (RLKQRRRTLK…DALRGKCEAL (64 aa)) constitute a bZIP domain. The leucine-zipper stretch occupies residues 79–93 (LQKQKSELEREVDKL). The segment at 141–164 (KSTPGSGSGPAHGPDPAHGPASCS) is disordered. Positions 149–164 (GPAHGPDPAHGPASCS) are enriched in low complexity.

It belongs to the bZIP family. Maf subfamily. In terms of assembly, monomer and homo- or heterodimer. Interacts with MIP. Forms high affinity heterodimers with members of the CNC-bZIP family such as NFE2L1/NRF1. As to expression, expressed in the term myometrium and kidney.

It localises to the nucleus. Since they lack a putative transactivation domain, the small Mafs behave as transcriptional repressors when they dimerize among themselves. However, they seem to serve as transcriptional activators by dimerizing with other (usually larger) basic-zipper proteins, such as NFE2L1/NRF1, and recruiting them to specific DNA-binding sites. Interacts with the upstream promoter region of the oxytocin receptor gene. May be a transcriptional enhancer in the up-regulation of the oxytocin receptor gene at parturition. This Homo sapiens (Human) protein is Transcription factor MafF (MAFF).